Here is a 521-residue protein sequence, read N- to C-terminus: Matrix metalloproteinase-A (521 aa).

The signal sequence occupies residues 1-21; it reads MFTGLHDILIILFLLVTLKIA. The propeptide at 22–95 is activation peptide; the sequence is QNVDHTKFLQ…EDHQKSRGKR (74 aa). Positions 78 to 85 match the Cysteine switch motif; sequence PRCGHPDV. Cysteine 80 is a binding site for Zn(2+). The Extracellular portion of the chain corresponds to 96–500; the sequence is YAPPQFKWKE…FCPRNEKLVL (405 aa). An N-linked (GlcNAc...) asparagine glycan is attached at asparagine 199. Histidine 215 provides a ligand contact to Zn(2+). Glutamate 216 is a catalytic residue. Positions 219 and 225 each coordinate Zn(2+). The tract at residues 259–298 is disordered; the sequence is KASKKENEEEERKTENEDKRRKTEKDRGRTREHESDDIRP. The segment covering 261-298 has biased composition (basic and acidic residues); sequence SKKENEEEERKTENEDKRRKTEKDRGRTREHESDDIRP. Hemopexin repeat units lie at residues 300 to 347, 391 to 443, and 444 to 492; these read ECRV…FPGL, EKYV…WARV, and PKGV…FGFC. Asparagine 469 carries N-linked (GlcNAc...) asparagine glycosylation. The helical transmembrane segment at 501 to 521 threads the bilayer; that stretch reads NSSSSHFSLIYATITILILIF.

This sequence belongs to the peptidase M10A family. It depends on Zn(2+) as a cofactor. Expressed in the anchor cell. Expressed in the anchor cell throughout the L3 and the early L4 stage, but not in vulva precursor cells P6.p, P6.px, or P6.pxx. Expression in P6.pxxx cells begins in late-L4 stage. During L4 lethargus, expressed in all four vulE cells, but not in vulF cells. The expression in vulE cells persists in adulthood. In males, expressed in the linker cell (LC) from the early L4 stage until LC death during the L4-to-adult molt.

The protein localises to the cell membrane. The protein resides in the basolateral cell membrane. Its function is as follows. Metalloprotease which, together with cadherin cdh-3 and hemicentin him-4, plays a role in anchor cell (AC) invasion during postembryonic vulval development probably by promoting the degradation of the basement membrane separating the gonad from the vulva epithelium. This is Matrix metalloproteinase-A from Caenorhabditis elegans.